We begin with the raw amino-acid sequence, 212 residues long: Uridine kinase (212 aa).

13 to 20 is an ATP binding site; the sequence is GGSGSGKT.

The protein belongs to the uridine kinase family.

Its subcellular location is the cytoplasm. The enzyme catalyses uridine + ATP = UMP + ADP + H(+). It catalyses the reaction cytidine + ATP = CMP + ADP + H(+). The protein operates within pyrimidine metabolism; CTP biosynthesis via salvage pathway; CTP from cytidine: step 1/3. Its pathway is pyrimidine metabolism; UMP biosynthesis via salvage pathway; UMP from uridine: step 1/1. The chain is Uridine kinase from Bacillus cytotoxicus (strain DSM 22905 / CIP 110041 / 391-98 / NVH 391-98).